A 243-amino-acid chain; its full sequence is PF03932 family protein CutC (243 aa).

It belongs to the CutC family.

It localises to the cytoplasm. This chain is PF03932 family protein CutC, found in Parabacteroides distasonis (strain ATCC 8503 / DSM 20701 / CIP 104284 / JCM 5825 / NCTC 11152).